Here is a 651-residue protein sequence, read N- to C-terminus: ATP synthase F(1) complex catalytic subunit beta, mitochondrial (651 aa).

Residues 1–30 constitute a mitochondrion transit peptide; it reads MFVARRLSKNITQISKTAVKTSVRAVPVRG. ADP-binding residues include glycine 259, valine 260, glycine 261, lysine 262, threonine 263, and valine 264. Glycine 259 serves as a coordination point for ATP. Phosphate contacts are provided by glycine 259, valine 260, glycine 261, lysine 262, and threonine 263. ATP-binding residues include glycine 261, lysine 262, threonine 263, and valine 264. Threonine 263 lines the Mg(2+) pocket. A Mg(2+)-binding site is contributed by glutamate 288. Residue arginine 289 coordinates ATP.

It belongs to the ATPase alpha/beta chains family. As to quaternary structure, homotrimer. Component of the ATP synthase complex composed at least of ATP5F1A/subunit alpha, ATP5F1B/subunit beta, ATP5MC1/subunit c (homooctomer), MT-ATP6/subunit a, MT-ATP8/subunit 8, ATP5ME/subunit e, ATP5MF/subunit f, ATP5MG/subunit g, ATP5MK/subunit k, ATP5MJ/subunit j, ATP5F1C/subunit gamma, ATP5F1D/subunit delta, ATP5F1E/subunit epsilon, ATP5PF/subunit F6, ATP5PB/subunit b, ATP5PD/subunit d, ATP5PO/subunit OSCP. ATP synthase complex consists of a soluble F(1) head domain (subunits alpha(3) and beta(3)) - the catalytic core - and a membrane F(0) domain - the membrane proton channel (subunits c, a, 8, e, f, g, k and j). These two domains are linked by a central stalk (subunits gamma, delta, and epsilon) rotating inside the F1 region and a stationary peripheral stalk (subunits F6, b, d, and OSCP).

The protein localises to the mitochondrion inner membrane. It carries out the reaction ATP + H2O + 4 H(+)(in) = ADP + phosphate + 5 H(+)(out). Functionally, catalytic subunit beta, of the mitochondrial membrane ATP synthase complex (F(1)F(0) ATP synthase or Complex V) that produces ATP from ADP in the presence of a proton gradient across the membrane which is generated by electron transport complexes of the respiratory chain. ATP synthase complex consist of a soluble F(1) head domain - the catalytic core - and a membrane F(1) domain - the membrane proton channel. These two domains are linked by a central stalk rotating inside the F(1) region and a stationary peripheral stalk. During catalysis, ATP synthesis in the catalytic domain of F(1) is coupled via a rotary mechanism of the central stalk subunits to proton translocation. In vivo, can only synthesize ATP although its ATP hydrolase activity can be activated artificially in vitro. With the subunit alpha (ATP5F1A), forms the catalytic core in the F(1) domain. The polypeptide is ATP synthase F(1) complex catalytic subunit beta, mitochondrial (Dictyostelium discoideum (Social amoeba)).